The primary structure comprises 431 residues: Enolase (431 aa).

Gln164 provides a ligand contact to (2R)-2-phosphoglycerate. Glu206 (proton donor) is an active-site residue. The Mg(2+) site is built by Asp243, Glu288, and Asp315. (2R)-2-phosphoglycerate-binding residues include Lys340, Arg369, Ser370, and Lys391. The active-site Proton acceptor is Lys340.

Belongs to the enolase family. Mg(2+) is required as a cofactor.

The protein localises to the cytoplasm. Its subcellular location is the secreted. It is found in the cell surface. It catalyses the reaction (2R)-2-phosphoglycerate = phosphoenolpyruvate + H2O. Its pathway is carbohydrate degradation; glycolysis; pyruvate from D-glyceraldehyde 3-phosphate: step 4/5. Catalyzes the reversible conversion of 2-phosphoglycerate (2-PG) into phosphoenolpyruvate (PEP). It is essential for the degradation of carbohydrates via glycolysis. The chain is Enolase from Fervidobacterium nodosum (strain ATCC 35602 / DSM 5306 / Rt17-B1).